The chain runs to 529 residues: Intraflagellar transport protein 56 (529 aa).

Positions 1–21 are disordered; sequence MLHNRMTTAFERSKEQEHEAA. Over residues 11–21 the composition is skewed to basic and acidic residues; the sequence is ERSKEQEHEAA. TPR repeat units follow at residues 57 to 90, 154 to 187, 189 to 221, 285 to 321, 359 to 392, and 428 to 461; these read GNAD…KNPP, SADQ…QPEC, AIYM…AEDS, SEAR…EYTL, VLGR…PKES, and PVHR…SLQT.

The protein belongs to the IFT56 family.

It is found in the cell projection. It localises to the cilium. The protein localises to the flagellum. The protein resides in the cytoplasm. Its subcellular location is the cytoskeleton. It is found in the flagellum axoneme. It localises to the flagellum basal body. In terms of biological role, component of the intraflagellar transport complex B (IFT-B) involved in flagellar assembly. This chain is Intraflagellar transport protein 56, found in Giardia intestinalis (strain ATCC 50803 / WB clone C6) (Giardia lamblia).